We begin with the raw amino-acid sequence, 347 residues long: High mobility group protein 20A (347 aa).

Polar residues-rich tracts occupy residues methionine 1–leucine 10 and serine 40–proline 49. 2 disordered regions span residues methionine 1–phenylalanine 113 and phenylalanine 179–lysine 211. A compositionally biased stretch (low complexity) spans leucine 55–serine 66. The segment covering asparagine 72 to serine 82 has biased composition (basic and acidic residues). The span at lysine 83 to proline 96 shows a compositional bias: basic residues. Positions proline 103–glutamine 171 form a DNA-binding region, HMG box. The residue at position 105 (serine 105) is a Phosphoserine. Residues lysine 182–lysine 211 show a composition bias toward basic and acidic residues. A coiled-coil region spans residues serine 229–glutamine 273.

In terms of assembly, interacts with DTNB. As to expression, ubiquitous.

The protein resides in the nucleus. Its function is as follows. Plays a role in neuronal differentiation as chromatin-associated protein. Acts as inhibitor of HMG20B. Overcomes the repressive effects of the neuronal silencer REST and induces the activation of neuronal-specific genes. Involved in the recruitment of the histone methyltransferase KMT2A/MLL1 and consequent increased methylation of histone H3 lysine 4. The sequence is that of High mobility group protein 20A (HMG20A) from Homo sapiens (Human).